A 405-amino-acid polypeptide reads, in one-letter code: PP2A regulatory subunit TAP46 (405 aa).

2 disordered regions span residues 159–189 and 352–405; these read ERRG…SEEE and ATTS…TPCG. The segment covering 165–174 has biased composition (polar residues); it reads TKASALSTPV. Acidic residues-rich tracts occupy residues 176-189 and 367-377; these read SGED…SEEE and EDEEDDDEDEE. Positions 378 to 393 are enriched in basic and acidic residues; it reads AVMKARAFDDWKDDNP.

It belongs to the IGBP1/TAP42 family. Interacts with the 36 kDa catalytic subunit (subunit C) of PP2A. Interacts with PP2A1 and PP2A2. Interacts with PP2A3, PPX1 and FYPP1. Interacts with FYPP3 and ABI5. Interacts with ATPK1/S6K1 and ATPK2/S6K2. Interacts with TIP41L. In terms of processing, phosphorylated by TOR kinase in vitro. Ubiquitous. Highly expressed in seed, and particularly in the embryo.

In terms of biological role, involved in the positive regulation of the TOR signaling pathway. Acts as a negative regulator of PP2A catalytic activity. Plays a positive role in the ABA-regulated inhibition of germination, probably throught its interaction with ABI5. This is PP2A regulatory subunit TAP46 from Arabidopsis thaliana (Mouse-ear cress).